The sequence spans 674 residues: Enzymatic polyprotein (674 aa).

A protease region spans residues 40–130 (IELHCFVDTG…CQLYEPFIQF (91 aa)). Aspartate 47 is a catalytic residue. A Reverse transcriptase domain is found at 267-447 (LKVIKPSKSP…KKINFLGLEI (181 aa)).

The protein belongs to the caulimoviridae enzymatic polyprotein family.

It catalyses the reaction DNA(n) + a 2'-deoxyribonucleoside 5'-triphosphate = DNA(n+1) + diphosphate. Encodes for at least two polypeptides: protease (PR) and reverse transcriptase (RT). The protease processes the polyprotein in cis. Reverse transcriptase is multifunctional enzyme that converts the viral RNA genome into dsDNA in viral cytoplasmic capsids. This enzyme displays a DNA polymerase activity that can copy either DNA or RNA templates, and a ribonuclease H (RNase H) activity that cleaves the RNA strand of RNA-DNA heteroduplexes in a partially processive 3'- to 5'-endonucleasic mode. Neo-synthesized pregenomic RNA (pgRNA) are encapsidated, and reverse-transcribed inside the nucleocapsid. Partial (+)DNA is synthesized from the (-)DNA template and generates the relaxed circular DNA (RC-DNA) genome. After budding and infection, the RC-DNA migrates in the nucleus, and is converted into a plasmid-like covalently closed circular DNA (cccDNA). The protein is Enzymatic polyprotein of Arabidopsis thaliana (Mouse-ear cress).